The chain runs to 165 residues: Putative pre-16S rRNA nuclease (165 aa).

The protein belongs to the YqgF nuclease family.

It is found in the cytoplasm. Could be a nuclease involved in processing of the 5'-end of pre-16S rRNA. The protein is Putative pre-16S rRNA nuclease of Brucella anthropi (strain ATCC 49188 / DSM 6882 / CCUG 24695 / JCM 21032 / LMG 3331 / NBRC 15819 / NCTC 12168 / Alc 37) (Ochrobactrum anthropi).